The sequence spans 188 residues: GTPase KRas (188 aa).

GTP is bound by residues 10 to 18 (GAGGVGKSA), 29 to 35 (VDEYDPT), 59 to 60 (AG), and 116 to 119 (NKYD). The Effector region motif lies at 32–40 (YDPTIEDSY). Positions 167–188 (KEKMSKEGKKKKKKSKTKCILM) are disordered. Cys185 carries the post-translational modification Cysteine methyl ester. A lipid anchor (S-farnesyl cysteine) is attached at Cys185. A propeptide spans 186–188 (ILM) (removed in mature form).

Belongs to the small GTPase superfamily. Ras family.

The protein localises to the cell membrane. It localises to the cytoplasm. The catalysed reaction is GTP + H2O = GDP + phosphate + H(+). Alternates between an inactive form bound to GDP and an active form bound to GTP. Activated by a guanine nucleotide-exchange factor (GEF) and inactivated by a GTPase-activating protein (GAP). Functionally, ras proteins bind GDP/GTP and possess intrinsic GTPase activity. Plays an important role in the regulation of cell proliferation. May play a role in promoting oncogenic events by inducing transcriptional silencing of tumor suppressor genes (TSGs). The sequence is that of GTPase KRas (kras) from Kryptolebias marmoratus (Mangrove killifish).